The chain runs to 344 residues: Methionine import ATP-binding protein MetN (344 aa).

Residues 2-241 form the ABC transporter domain; that stretch reads IEINQVNKVF…PKTELAHDFI (240 aa). 38 to 45 lines the ATP pocket; that stretch reads GSSGAGKS.

It belongs to the ABC transporter superfamily. Methionine importer (TC 3.A.1.24) family. The complex is composed of two ATP-binding proteins (MetN), two transmembrane proteins (MetI) and a solute-binding protein (MetQ).

Its subcellular location is the cell inner membrane. The enzyme catalyses L-methionine(out) + ATP + H2O = L-methionine(in) + ADP + phosphate + H(+). It catalyses the reaction D-methionine(out) + ATP + H2O = D-methionine(in) + ADP + phosphate + H(+). Its function is as follows. Part of the ABC transporter complex MetNIQ involved in methionine import. Responsible for energy coupling to the transport system. This Vibrio vulnificus (strain YJ016) protein is Methionine import ATP-binding protein MetN.